Consider the following 357-residue polypeptide: Protein RecA (357 aa).

67 to 74 (GPESSGKT) serves as a coordination point for ATP.

Belongs to the RecA family.

It localises to the cytoplasm. Its function is as follows. Can catalyze the hydrolysis of ATP in the presence of single-stranded DNA, the ATP-dependent uptake of single-stranded DNA by duplex DNA, and the ATP-dependent hybridization of homologous single-stranded DNAs. It interacts with LexA causing its activation and leading to its autocatalytic cleavage. The chain is Protein RecA from Leifsonia xyli subsp. xyli (strain CTCB07).